The chain runs to 185 residues: MSRLRIYDDTRPESPLLDTQDGAVIAAELQKIGVTFERWQATAPVAPGASQEEVFAAYRADIDRLVAERGFKSVDVASIAPDNPNRAELRKKFLDEHFHKEDEVRFFVAGSGLFTLHVGDKVYEIECVKDDLIAVPDGTTHWFDMGDEPSFVAIRFFTEPDGWVGHFTGTDIAQKFPRYVPTQAS.

The Fe(2+) site is built by H97, H99, E103, and H141. The Ni(2+) site is built by H97, H99, E103, and H141.

Belongs to the acireductone dioxygenase (ARD) family. As to quaternary structure, monomer. It depends on Fe(2+) as a cofactor. Requires Ni(2+) as cofactor.

The enzyme catalyses 1,2-dihydroxy-5-(methylsulfanyl)pent-1-en-3-one + O2 = 3-(methylsulfanyl)propanoate + CO + formate + 2 H(+). It catalyses the reaction 1,2-dihydroxy-5-(methylsulfanyl)pent-1-en-3-one + O2 = 4-methylsulfanyl-2-oxobutanoate + formate + 2 H(+). The protein operates within amino-acid biosynthesis; L-methionine biosynthesis via salvage pathway; L-methionine from S-methyl-5-thio-alpha-D-ribose 1-phosphate: step 5/6. Catalyzes 2 different reactions between oxygen and the acireductone 1,2-dihydroxy-3-keto-5-methylthiopentene (DHK-MTPene) depending upon the metal bound in the active site. Fe-containing acireductone dioxygenase (Fe-ARD) produces formate and 2-keto-4-methylthiobutyrate (KMTB), the alpha-ketoacid precursor of methionine in the methionine recycle pathway. Ni-containing acireductone dioxygenase (Ni-ARD) produces methylthiopropionate, carbon monoxide and formate, and does not lie on the methionine recycle pathway. The protein is Acireductone dioxygenase of Stenotrophomonas maltophilia (strain K279a).